The following is a 223-amino-acid chain: UPF0441 protein YgiB (223 aa).

A compositionally biased stretch (low complexity) spans 178–195; the sequence is TVPKTAMAPKPATTTTVT. Residues 178–223 are disordered; the sequence is TVPKTAMAPKPATTTTVTRGGFGESVAKQSTMQRSAAGTSTRSMGG. Positions 204 to 223 are enriched in polar residues; the sequence is AKQSTMQRSAAGTSTRSMGG.

The protein belongs to the UPF0441 family.

The chain is UPF0441 protein YgiB from Salmonella heidelberg (strain SL476).